Reading from the N-terminus, the 79-residue chain is Acyl carrier protein (79 aa).

In terms of domain architecture, Carrier spans 2–77 (SEIGERVKKI…DAVKFLEKNA (76 aa)). Serine 37 is modified (O-(pantetheine 4'-phosphoryl)serine).

It belongs to the acyl carrier protein (ACP) family. In terms of processing, 4'-phosphopantetheine is transferred from CoA to a specific serine of apo-ACP by AcpS. This modification is essential for activity because fatty acids are bound in thioester linkage to the sulfhydryl of the prosthetic group.

It localises to the cytoplasm. The protein operates within lipid metabolism; fatty acid biosynthesis. Its function is as follows. Carrier of the growing fatty acid chain in fatty acid biosynthesis. This Rhodopseudomonas palustris (strain BisA53) protein is Acyl carrier protein.